A 428-amino-acid polypeptide reads, in one-letter code: Glutamine synthetase, chloroplastic (428 aa).

A chloroplast-targeting transit peptide spans 1–48 (MAQAVVPAMQCQVGAVRARPAAAAAAAGGRVWGVRRTGRGTSGFRVMA). One can recognise a GS beta-grasp domain in the interval 75 to 155 (IIAEYIWVGG…VMCDTYTPAG (81 aa)). Residues 95–120 (TISKPVEDPSELPKWNYDGSSTGQAP) are disordered. The GS catalytic domain maps to 159–428 (PTNKRNRAAQ…LAAKKLALKV (270 aa)).

It belongs to the glutamine synthetase family. Homooctamer.

Its subcellular location is the plastid. The protein resides in the chloroplast. The enzyme catalyses L-glutamate + NH4(+) + ATP = L-glutamine + ADP + phosphate + H(+). Functionally, light-modulated chloroplastic glutamine synthetase, encoded by a nuclear gene and expressed primarily in leaves, and which is responsible for the reassimilation of the ammonia generated by photorespiration. This chain is Glutamine synthetase, chloroplastic, found in Oryza sativa subsp. japonica (Rice).